A 736-amino-acid chain; its full sequence is Polyribonucleotide nucleotidyltransferase (736 aa).

D506 and D512 together coordinate Mg(2+). In terms of domain architecture, KH spans 573-632; it reads PRLTTIQVPVDAIGLIIGKGGETIRSITEETGAEINIEDDGTVTIACSSVEGTHAALATI. The 76-residue stretch at 642 to 717 folds into the S1 motif domain; the sequence is GTIYLGKVRD…GKTRFALSMR (76 aa).

This sequence belongs to the polyribonucleotide nucleotidyltransferase family. Mg(2+) serves as cofactor.

The protein resides in the cytoplasm. It carries out the reaction RNA(n+1) + phosphate = RNA(n) + a ribonucleoside 5'-diphosphate. Functionally, involved in mRNA degradation. Catalyzes the phosphorolysis of single-stranded polyribonucleotides processively in the 3'- to 5'-direction. This is Polyribonucleotide nucleotidyltransferase from Chlorobium limicola (strain DSM 245 / NBRC 103803 / 6330).